The following is a 317-amino-acid chain: Adenosine receptor A3 (317 aa).

Residues 1–14 are Extracellular-facing; it reads MPVNSTAVSLASVT. N-linked (GlcNAc...) asparagine glycosylation is present at Asn4. Residues 15–37 traverse the membrane as a helical segment; it reads YISVEILIGLCAIVGNVLVIWVV. The Cytoplasmic segment spans residues 38–48; the sequence is KLNPSLQTTTF. Residues 49–72 form a helical membrane-spanning segment; it reads YFIVSLALADIAVGVLVMPLAIVI. Residues 73–84 are Extracellular-facing; the sequence is SLGVTIHFYSCL. Cys83 and Cys165 are joined by a disulfide. Residues 85-106 form a helical membrane-spanning segment; the sequence is LMTCLLMIFTHASIMSLLAIAV. The Cytoplasmic portion of the chain corresponds to 107–126; it reads DRYLRVKLTVRYRRVTTQRR. A helical transmembrane segment spans residues 127–148; that stretch reads IWLALGLCWLVSFLVGLTPMFG. The Extracellular portion of the chain corresponds to 149–176; that stretch reads WNMKLSSADKNLTFLPCQFRSVMRMDYM. The chain crosses the membrane as a helical span at residues 177–197; it reads VYFSFFTWILIPLVVMCAIYF. The Cytoplasmic segment spans residues 198–230; that stretch reads DIFYVIRNRLSQNFSGSKETGAFYGREFKTAKS. Residues 231–254 form a helical membrane-spanning segment; sequence LSLVLFLFALSWLPLSIINCIIYF. The Extracellular segment spans residues 255–260; the sequence is NGEVPQ. Residues 261-283 form a helical membrane-spanning segment; it reads IVLYLGILLSHANSMMNPIVYAY. Residues 284–317 are Cytoplasmic-facing; the sequence is KIKKFKETYLLILKACVICQPSKSMDPSIEQTSE. A lipid anchor (S-palmitoyl cysteine) is attached at Cys302.

This sequence belongs to the G-protein coupled receptor 1 family. In terms of processing, phosphorylation on Thr-315 and Ser-316 may be crucial for rapid desensitization. Phosphorylation on Thr-315 may be necessary for phosphorylation on Ser-316 to occur.

It is found in the cell membrane. Receptor for adenosine. The activity of this receptor is mediated by G proteins which inhibits adenylyl cyclase. This is Adenosine receptor A3 (ADORA3) from Bos taurus (Bovine).